A 166-amino-acid chain; its full sequence is Small ribosomal subunit protein uS5 (166 aa).

The S5 DRBM domain occupies F11–V74.

It belongs to the universal ribosomal protein uS5 family. In terms of assembly, part of the 30S ribosomal subunit. Contacts proteins S4 and S8.

With S4 and S12 plays an important role in translational accuracy. In terms of biological role, located at the back of the 30S subunit body where it stabilizes the conformation of the head with respect to the body. In Alteromonas mediterranea (strain DSM 17117 / CIP 110805 / LMG 28347 / Deep ecotype), this protein is Small ribosomal subunit protein uS5.